A 271-amino-acid chain; its full sequence is uncharacterized protein (271 aa).

The first 18 residues, methionine 1–cysteine 18, serve as a signal peptide directing secretion. Residues alanine 19–tyrosine 187 are Lumenal-facing. Residues phenylalanine 188–tryptophan 208 form a helical membrane-spanning segment. Residues glutamine 209 to glycine 230 are Cytoplasmic-facing. Residues phenylalanine 231–phenylalanine 251 traverse the membrane as a helical segment. Residues glutamine 252–leucine 271 are Lumenal-facing.

The protein resides in the endoplasmic reticulum membrane. This is an uncharacterized protein from Schizosaccharomyces pombe (strain 972 / ATCC 24843) (Fission yeast).